The chain runs to 104 residues: Large ribosomal subunit protein uL24 (104 aa).

Belongs to the universal ribosomal protein uL24 family. As to quaternary structure, part of the 50S ribosomal subunit.

Its function is as follows. One of two assembly initiator proteins, it binds directly to the 5'-end of the 23S rRNA, where it nucleates assembly of the 50S subunit. In terms of biological role, one of the proteins that surrounds the polypeptide exit tunnel on the outside of the subunit. This is Large ribosomal subunit protein uL24 from Bradyrhizobium sp. (strain ORS 278).